The primary structure comprises 213 residues: Orotate phosphoribosyltransferase (213 aa).

Residue Lys26 coordinates 5-phospho-alpha-D-ribose 1-diphosphate. An orotate-binding site is contributed by 34-35; sequence FF. 5-phospho-alpha-D-ribose 1-diphosphate-binding positions include 72–73, Arg99, Lys100, Lys103, His105, and 124–132; these read YK and DDVITAGTA. Residues Thr128 and Arg156 each coordinate orotate.

The protein belongs to the purine/pyrimidine phosphoribosyltransferase family. PyrE subfamily. As to quaternary structure, homodimer. The cofactor is Mg(2+).

The enzyme catalyses orotidine 5'-phosphate + diphosphate = orotate + 5-phospho-alpha-D-ribose 1-diphosphate. Its pathway is pyrimidine metabolism; UMP biosynthesis via de novo pathway; UMP from orotate: step 1/2. Functionally, catalyzes the transfer of a ribosyl phosphate group from 5-phosphoribose 1-diphosphate to orotate, leading to the formation of orotidine monophosphate (OMP). In Photorhabdus laumondii subsp. laumondii (strain DSM 15139 / CIP 105565 / TT01) (Photorhabdus luminescens subsp. laumondii), this protein is Orotate phosphoribosyltransferase.